A 577-amino-acid chain; its full sequence is ABC transporter G family member 4 (577 aa).

An ABC transporter domain is found at 6-248; it reads LSTSSISYAK…LLSKGFTVPS (243 aa). 48-55 provides a ligand contact to ATP; that stretch reads GPSGAGKS. Residues 299 to 509 enclose the ABC transmembrane type-2 domain; that stretch reads TEISLLSSRF…ALDALLINEY (211 aa). 7 helical membrane passes run 318–338, 353–373, 400–420, 429–449, 458–478, 487–507, and 548–568; these read LLLT…TIYL, LFAF…PIFI, VFLP…YFLV, LAYF…FVLF, IAGT…SGYF, YWLF…LLIN, and FNVY…FLVL.

It belongs to the ABC transporter superfamily. ABCG family. Eye pigment precursor importer (TC 3.A.1.204) subfamily.

Its subcellular location is the membrane. The protein is ABC transporter G family member 4 (ABCG4) of Arabidopsis thaliana (Mouse-ear cress).